Here is a 216-residue protein sequence, read N- to C-terminus: Thymidine kinase (216 aa).

Residues 9–16 and 86–89 each bind ATP; these read GPMDSGKS and DEAQ. Catalysis depends on Glu87, which acts as the Proton acceptor.

This sequence belongs to the thymidine kinase family. In terms of assembly, homotetramer.

Its subcellular location is the cytoplasm. It catalyses the reaction thymidine + ATP = dTMP + ADP + H(+). This is Thymidine kinase from Cutibacterium acnes (strain DSM 16379 / KPA171202) (Propionibacterium acnes).